The sequence spans 632 residues: Chaperone protein HtpG (632 aa).

Residues 1-339 (MAHETMSFQA…SADLPLNVSR (339 aa)) form an a; substrate-binding region. The segment at 340–559 (EILQESRDVK…DNDMSGYLQR (220 aa)) is b. The c stretch occupies residues 560–632 (MLKAAGQNAP…TNALLLSRAA (73 aa)).

The protein belongs to the heat shock protein 90 family. Homodimer.

It is found in the cytoplasm. Functionally, molecular chaperone. Has ATPase activity. This is Chaperone protein HtpG from Burkholderia lata (strain ATCC 17760 / DSM 23089 / LMG 22485 / NCIMB 9086 / R18194 / 383).